We begin with the raw amino-acid sequence, 444 residues long: Phosphoglucosamine mutase (444 aa).

The active-site Phosphoserine intermediate is the Ser-104. Positions 104, 243, 245, and 247 each coordinate Mg(2+). Position 104 is a phosphoserine (Ser-104).

The protein belongs to the phosphohexose mutase family. Requires Mg(2+) as cofactor. Post-translationally, activated by phosphorylation.

It carries out the reaction alpha-D-glucosamine 1-phosphate = D-glucosamine 6-phosphate. In terms of biological role, catalyzes the conversion of glucosamine-6-phosphate to glucosamine-1-phosphate. This Neisseria meningitidis serogroup C / serotype 2a (strain ATCC 700532 / DSM 15464 / FAM18) protein is Phosphoglucosamine mutase.